A 130-amino-acid polypeptide reads, in one-letter code: Transcription antitermination protein NusB (130 aa).

Belongs to the NusB family.

Involved in transcription antitermination. Required for transcription of ribosomal RNA (rRNA) genes. Binds specifically to the boxA antiterminator sequence of the ribosomal RNA (rrn) operons. The sequence is that of Transcription antitermination protein NusB from Sulfurovum sp. (strain NBC37-1).